A 74-amino-acid chain; its full sequence is MFLMYLLVQTTESSWLSKTYKKLENSAKKRISEGVAIAILGGLRHRRSVAHQEEASLHVKTDELPSPDTVREQL.

An N-terminal signal peptide occupies residues 1-13 (MFLMYLLVQTTES). Residues 45-74 (HRRSVAHQEEASLHVKTDELPSPDTVREQL) constitute a propeptide, removed in mature form. The segment at 51–74 (HQEEASLHVKTDELPSPDTVREQL) is disordered.

It belongs to the cecropin family. As to expression, expressed in the body wall, intestine, uterus and ovary.

It is found in the secreted. Its function is as follows. Has antibacterial activity against several Gram-positive and Gram-negative bacteria. Is weakly active against yeasts. Acts by a nonpore mechanism. This Ascaris suum (Pig roundworm) protein is Cecropin-P4 (ASCEC-4).